The sequence spans 2430 residues: Transcription factor HIVEP2 (2430 aa).

The segment at 1 to 127 (MDTGDTALGQ…SLEGPPWLFP (127 aa)) is disordered. Polar residues-rich tracts occupy residues 11 to 22 (KATSRSGETDSV) and 96 to 110 (HSLS…QGMT). C2H2-type zinc fingers lie at residues 189-211 (YICP…IRSH) and 217-239 (YPCI…RKSH). 3 disordered regions span residues 271–302 (IHSD…PPVP), 374–418 (SEKK…NTNA), and 744–995 (AHGH…SGKH). Over residues 381-418 (SEPSLNLLSPHSKGSTDSGYFSRSESAEQQISPPNTNA) the composition is skewed to polar residues. 2 stretches are compositionally biased toward basic and acidic residues: residues 744 to 753 (AHGHSDRLDP) and 775 to 784 (DPDKMTDLGK). Residues 792–804 (SVIQHTNSLSRPN) show a composition bias toward polar residues. Phosphoserine is present on Ser811. The span at 853 to 863 (SKPTPSQQVPQ) shows a compositional bias: polar residues. A compositionally biased stretch (basic and acidic residues) spans 884–908 (RVTEEPDKPEKEKEAPTKEPEKPVE). The Nuclear localization signal motif lies at 929 to 935 (PKKKRLR). Ser942, Ser947, Ser1040, Ser1431, and Ser1435 each carry phosphoserine. Low complexity predominate over residues 944–974 (GESSFESTGTGLSRSPSQESNLSHSSSFSMS). Residues 1472–1584 (KKGLSRPQKP…GGQQEEEGKA (113 aa)) form a disordered region. 2 stretches are compositionally biased toward low complexity: residues 1499–1520 (SRSS…SASG) and 1560–1569 (SDMSMSPQSS). 2 consecutive C2H2-type zinc fingers follow at residues 1783-1805 (YICE…IRTH) and 1811-1835 (YVCK…SKAH). 2 disordered regions span residues 1848-1931 (SVDD…SSLP) and 1986-2117 (FQSK…SPRR). Residues 1850–1860 (DDTETEEAENM) show a composition bias toward acidic residues. Basic and acidic residues predominate over residues 1861-1871 (EELHKTSEKHS). Residues 1883-1909 (DAEESDGEDGDDNDDDDEDDDDFDDQG) are compositionally biased toward acidic residues. Residues 1991–2001 (TDSEPDKDRLD) are compositionally biased toward basic and acidic residues. The segment covering 2013 to 2037 (SSEPSSSPRDFSPSSYRSSPGYDSS) has biased composition (low complexity). Repeat copies occupy residues 2037 to 2040 (SPCR), 2043 to 2046 (SPKR), 2055 to 2058 (SPRR), 2067 to 2070 (SPMR), 2073 to 2076 (SPRK), 2090 to 2093 (SPRR), 2096 to 2099 (SPRR), 2102 to 2105 (SPGK), 2114 to 2117 (SPRR), and 2129 to 2132 (SPRR). The tract at residues 2037-2132 (SPCRDNSPKR…TTIRAPSPRR (96 aa)) is 10 X 4 AA tandem repeats of S-P-[RGMKC]-[RK]. A compositionally biased stretch (basic and acidic residues) spans 2062–2085 (PRRDLSPMRHLSPRKEAALRREMS). A Phosphoserine modification is found at Ser2102. The segment covering 2107-2116 (ITARRDLSPR) has biased composition (basic and acidic residues). 3 disordered regions span residues 2226–2252 (PALS…GAPG), 2268–2309 (KQAP…QEEN), and 2352–2430 (SIRH…NQLH). A compositionally biased stretch (low complexity) spans 2271-2289 (PQVLQSSGLPSSPSSPRLL). Phosphoserine is present on residues Ser2281 and Ser2285. Over residues 2291–2301 (KQSTSEDSLNS) the composition is skewed to polar residues. The segment covering 2371–2380 (PDLHDGEKDT) has biased composition (basic and acidic residues). Polar residues predominate over residues 2406-2417 (FQSSKELSLSTE). 2 positions are modified to phosphoserine: Ser2413 and Ser2415.

In terms of assembly, interacts with TCF4. As to expression, expressed in heart, lung, skeletal muscle and liver. In the brain expressed in cerebral cortex, hippocampus, corpora amygdala and cerebellar cortex.

It is found in the nucleus. Functionally, specifically binds to the DNA sequence 5'-GGGACTTTCC-3' which is found in the enhancer elements of numerous viral promoters such as those of SV40, CMV, or HIV1. In addition, related sequences are found in the enhancer elements of a number of cellular promoters, including those of the class I MHC, interleukin-2 receptor, somatostatin receptor II, and interferon-beta genes. It may act in T-cell activation. The polypeptide is Transcription factor HIVEP2 (Hivep2) (Mus musculus (Mouse)).